We begin with the raw amino-acid sequence, 186 residues long: Protein GrpE (186 aa).

Residues Met-1–Gln-15 show a composition bias toward polar residues. The disordered stretch occupies residues Met-1–Ala-20.

This sequence belongs to the GrpE family. In terms of assembly, homodimer.

It is found in the cytoplasm. Participates actively in the response to hyperosmotic and heat shock by preventing the aggregation of stress-denatured proteins, in association with DnaK and GrpE. It is the nucleotide exchange factor for DnaK and may function as a thermosensor. Unfolded proteins bind initially to DnaJ; upon interaction with the DnaJ-bound protein, DnaK hydrolyzes its bound ATP, resulting in the formation of a stable complex. GrpE releases ADP from DnaK; ATP binding to DnaK triggers the release of the substrate protein, thus completing the reaction cycle. Several rounds of ATP-dependent interactions between DnaJ, DnaK and GrpE are required for fully efficient folding. The chain is Protein GrpE from Pseudomonas aeruginosa (strain LESB58).